Here is a 382-residue protein sequence, read N- to C-terminus: Flap endonuclease 1-B (382 aa).

An N-domain region spans residues 1-104; sequence MGIHGLAKLI…GELAKRSERR (104 aa). Asp34 lines the Mg(2+) pocket. 2 residues coordinate DNA: Arg47 and Arg70. The Mg(2+) site is built by Asp86, Glu158, Glu160, Asp179, and Asp181. An I-domain region spans residues 122-253; the sequence is NIEKFNKRLV…KRAIDLIRQH (132 aa). Glu158 provides a ligand contact to DNA. Residues Gly231 and Asp233 each contribute to the DNA site. Asp233 contacts Mg(2+). The tract at residues 336–344 is interaction with PCNA; the sequence is TQGRLDDFF. Residues 352-382 are disordered; the sequence is STKRKEVESKGSTKKKSKTGGTPAGKFKRGK.

This sequence belongs to the XPG/RAD2 endonuclease family. FEN1 subfamily. As to quaternary structure, interacts with PCNA. Three molecules of fen1 bind to one PCNA trimer with each molecule binding to one PCNA monomer. PCNA stimulates the nuclease activity without altering cleavage specificity. Mg(2+) serves as cofactor. Phosphorylated. Phosphorylation upon DNA damage induces relocalization to the nuclear plasma.

It is found in the nucleus. It localises to the nucleolus. Its subcellular location is the nucleoplasm. The protein resides in the mitochondrion. Structure-specific nuclease with 5'-flap endonuclease and 5'-3' exonuclease activities involved in DNA replication and repair. During DNA replication, cleaves the 5'-overhanging flap structure that is generated by displacement synthesis when DNA polymerase encounters the 5'-end of a downstream Okazaki fragment. It enters the flap from the 5'-end and then tracks to cleave the flap base, leaving a nick for ligation. Also involved in the long patch base excision repair (LP-BER) pathway, by cleaving within the apurinic/apyrimidinic (AP) site-terminated flap. Acts as a genome stabilization factor that prevents flaps from equilibrating into structures that lead to duplications and deletions. Also possesses 5'-3' exonuclease activity on nicked or gapped double-stranded DNA, and exhibits RNase H activity. Also involved in replication and repair of rDNA and in repairing mitochondrial DNA. In Xenopus laevis (African clawed frog), this protein is Flap endonuclease 1-B (fen1-b).